Reading from the N-terminus, the 233-residue chain is Cell surface glycoprotein gp42 (233 aa).

The signal sequence occupies residues 1 to 16; sequence MLLWMVLLLCVSMTEA. Ig-like domains follow at residues 23 to 98 and 115 to 195; these read PVLS…GTIQ and PVLT…RDIS. Residues Asn29, Asn66, and Asn181 are each glycosylated (N-linked (GlcNAc...) asparagine). Intrachain disulfides connect Cys40/Cys88 and Cys136/Cys184. Gly206 carries the GPI-anchor amidated glycine lipid modification. The propeptide at 207-233 is removed in mature form; it reads TASMKSTTVVIWLPVSCLVGWPWLLRF.

As to expression, NK cells.

It localises to the cell membrane. The polypeptide is Cell surface glycoprotein gp42 (Rattus norvegicus (Rat)).